Consider the following 185-residue polypeptide: Large ribosomal subunit protein uL5m (185 aa).

This sequence belongs to the universal ribosomal protein uL5 family.

Its subcellular location is the mitochondrion. In Brassica napus (Rape), this protein is Large ribosomal subunit protein uL5m (RPL5).